Reading from the N-terminus, the 733-residue chain is 2'-5'-oligoadenylate synthase 2 (733 aa).

G2 carries the N-myristoyl glycine lipid modification. OAS domain stretches follow at residues 47–365 (VPSQ…CWDV) and 373–713 (TPSH…WKVP). K408 is subject to N6-acetyllysine. S427 lines the ATP pocket. D439, D441, and D510 together coordinate Mg(2+). R574 and K577 together coordinate ATP.

The protein belongs to the 2-5A synthase family. In terms of assembly, homodimer. Mg(2+) is required as a cofactor. Myristoylation is not essential for its activity. In terms of processing, glycosylated. Glycosylation is essential for its activity.

It localises to the cytoplasm. Its subcellular location is the perinuclear region. The enzyme catalyses 3 ATP = 5'-triphosphoadenylyl-(2'-&gt;5')-adenylyl-(2'-&gt;5')-adenosine + 2 diphosphate. Produced as a latent enzyme which is activated by double stranded RNA (dsRNA) generated during the course of viral infection. The dsRNA activator must be at least 15 nucleotides long, and no modification of the 2'-hydroxyl group is tolerated. ssRNA or dsDNA do not act as activators. Strongly inhibited by copper, iron and zinc ions. Partially inhibited by cobalt and nickel ions. In terms of biological role, interferon-induced, dsRNA-activated antiviral enzyme which plays a critical role in cellular innate antiviral response. Activated by detection of double stranded RNA (dsRNA): polymerizes higher oligomers of 2'-5'-oligoadenylates (2-5A) from ATP which then bind to the inactive monomeric form of ribonuclease L (RNASEL) leading to its dimerization and subsequent activation. Activation of RNASEL leads to degradation of cellular as well as viral RNA, resulting in the inhibition of protein synthesis, thus terminating viral replication. Can mediate the antiviral effect via the classical RNASEL-dependent pathway or an alternative antiviral pathway independent of RNASEL. In addition, it may also play a role in other cellular processes such as apoptosis, cell growth, differentiation and gene regulation. May act as a negative regulator of lactation, stopping lactation in virally infected mammary gland lobules, thereby preventing transmission of viruses to neonates. Non-infected lobules would not be affected, allowing efficient pup feeding during infection. This chain is 2'-5'-oligoadenylate synthase 2 (Oas2), found in Rattus norvegicus (Rat).